A 181-amino-acid polypeptide reads, in one-letter code: Oleosin (181 aa).

A disordered region spans residues 1 to 28; that stretch reads TTTTYDRHFTTTQPHYRQDDRSRYDQQT. Positions 1-38 are polar; it reads TTTTYDRHFTTTQPHYRQDDRSRYDQQTHSQSTSRTLA. Residues 16–26 show a composition bias toward basic and acidic residues; the sequence is YRQDDRSRYDQ. Helical transmembrane passes span 38 to 58, 69 to 89, and 90 to 110; these read AIIA…LTFI, PLFV…GLAV, and TGFL…SYLF. A hydrophobic region spans residues 39-110; sequence IIALLPVGGI…TGLSSLSYLF (72 aa). A disordered region spans residues 155–181; the sequence is EMGDQGQVGVHAQVGGGKEGRKSGDRT. Residues 158–167 are compositionally biased toward low complexity; that stretch reads DQGQVGVHAQ. Residues 172–181 show a composition bias toward basic and acidic residues; the sequence is KEGRKSGDRT.

Belongs to the oleosin family.

The protein resides in the lipid droplet. Its subcellular location is the membrane. Its function is as follows. May have a structural role to stabilize the lipid body during desiccation of the seed by preventing coalescence of the oil. Probably interacts with both lipid and phospholipid moieties of lipid bodies. May also provide recognition signals for specific lipase anchorage in lipolysis during seedling growth. The protein is Oleosin of Helianthus annuus (Common sunflower).